A 1370-amino-acid polypeptide reads, in one-letter code: Histidine kinase P4 (1370 aa).

The signal sequence occupies residues Met1–Lys20. The chain crosses the membrane as a helical span at residues Trp799–Leu819. One can recognise a Histidine kinase domain in the interval Asn852 to Arg1072. His855 bears the Phosphohistidine; by autocatalysis mark. One can recognise a Response regulatory domain in the interval Thr1119–Leu1234. 4-aspartylphosphate is present on Asp1167. Positions Lys1266–Arg1365 constitute an HTH araC/xylS-type domain. DNA-binding regions (H-T-H motif) lie at residues Leu1284 to Thr1305 and Ile1332 to Phe1355.

Autophosphorylated. Activation requires a sequential transfer of a phosphate group from a His in the primary transmitter domain, to an Asp in the receiver domain and to a His in the secondary transmitter domain.

Its subcellular location is the membrane. It localises to the cell surface. It carries out the reaction ATP + protein L-histidine = ADP + protein N-phospho-L-histidine.. Its function is as follows. Histidine kinase probably involved in ulvan degradation. Ulvan is the main polysaccharide component of the Ulvales (green seaweed) cell wall. It is composed of disaccharide building blocks comprising 3-sulfated rhamnose (Rha3S) linked to D-glucuronic acid (GlcA), L-iduronic acid (IduA), or D-xylose (Xyl). This is Histidine kinase P4 from Formosa agariphila (strain DSM 15362 / KCTC 12365 / LMG 23005 / KMM 3901 / M-2Alg 35-1).